We begin with the raw amino-acid sequence, 711 residues long: Polyribonucleotide nucleotidyltransferase (711 aa).

Residues Asp-490 and Asp-496 each contribute to the Mg(2+) site. A KH domain is found at 557-616 (PRIETMQIPTDKIREVIGSGGKVIREIVETSGAKVDINDDGIIKIASANGEAIKKAYEMI). Positions 626 to 694 (GKVYTGTVVK…DRGKVRLSMK (69 aa)) constitute an S1 motif domain.

Belongs to the polyribonucleotide nucleotidyltransferase family. Mg(2+) serves as cofactor.

It is found in the cytoplasm. The catalysed reaction is RNA(n+1) + phosphate = RNA(n) + a ribonucleoside 5'-diphosphate. Its function is as follows. Involved in mRNA degradation. Catalyzes the phosphorolysis of single-stranded polyribonucleotides processively in the 3'- to 5'-direction. This chain is Polyribonucleotide nucleotidyltransferase, found in Dinoroseobacter shibae (strain DSM 16493 / NCIMB 14021 / DFL 12).